The chain runs to 530 residues: Phosphoenolpyruvate carboxykinase (ATP) (530 aa).

Residues Arg58, Tyr195, and Lys201 each coordinate substrate. ATP is bound by residues Lys201, His220, and 236–244; that span reads GLSGTGKTT. 2 residues coordinate Mn(2+): Lys201 and His220. Asp257 lines the Mn(2+) pocket. ATP contacts are provided by residues Glu285, Arg321, 440 to 441, and Thr446; that span reads RI. Arg321 serves as a coordination point for substrate.

Belongs to the phosphoenolpyruvate carboxykinase (ATP) family. Mn(2+) serves as cofactor.

It localises to the cytoplasm. It carries out the reaction oxaloacetate + ATP = phosphoenolpyruvate + ADP + CO2. The protein operates within carbohydrate biosynthesis; gluconeogenesis. In terms of biological role, involved in the gluconeogenesis. Catalyzes the conversion of oxaloacetate (OAA) to phosphoenolpyruvate (PEP) through direct phosphoryl transfer between the nucleoside triphosphate and OAA. The protein is Phosphoenolpyruvate carboxykinase (ATP) of Staphylococcus aureus (strain MRSA252).